A 267-amino-acid polypeptide reads, in one-letter code: Serine acetyltransferase (267 aa).

This sequence belongs to the transferase hexapeptide repeat family.

It is found in the cytoplasm. The catalysed reaction is L-serine + acetyl-CoA = O-acetyl-L-serine + CoA. It participates in amino-acid biosynthesis; L-cysteine biosynthesis; L-cysteine from L-serine: step 1/2. This Haemophilus influenzae (strain ATCC 51907 / DSM 11121 / KW20 / Rd) protein is Serine acetyltransferase (cysE).